Consider the following 283-residue polypeptide: Nopaline-binding periplasmic protein (283 aa).

An N-terminal signal peptide occupies residues 1-25 (MKFFNLNALAAVVTGVLLAAGPTQA). C63 and C70 are disulfide-bonded.

The protein belongs to the bacterial solute-binding protein 3 family.

The protein resides in the periplasm. Its function is as follows. Component of the nopaline active transport system probably consisting of four subunits: Q, M, P and T. This system is also capable of transporting octopine provided that catabolic functions are induced with nopaline. The protein is Nopaline-binding periplasmic protein (nocT) of Agrobacterium fabrum (strain C58 / ATCC 33970) (Agrobacterium tumefaciens (strain C58)).